The chain runs to 293 residues: Nucleotide-binding protein Dole_0503 (293 aa).

11 to 18 contributes to the ATP binding site; that stretch reads GLSGSGKS. 62–65 contacts GTP; the sequence is DLRE.

Belongs to the RapZ-like family.

Its function is as follows. Displays ATPase and GTPase activities. In Desulfosudis oleivorans (strain DSM 6200 / JCM 39069 / Hxd3) (Desulfococcus oleovorans), this protein is Nucleotide-binding protein Dole_0503.